Here is a 103-residue protein sequence, read N- to C-terminus: Large ribosomal subunit protein bL21 (103 aa).

The protein belongs to the bacterial ribosomal protein bL21 family. In terms of assembly, part of the 50S ribosomal subunit. Contacts protein L20.

This protein binds to 23S rRNA in the presence of protein L20. This chain is Large ribosomal subunit protein bL21, found in Variovorax paradoxus (strain S110).